The sequence spans 85 residues: Large ribosomal subunit protein bL27 (85 aa).

It belongs to the bacterial ribosomal protein bL27 family.

The polypeptide is Large ribosomal subunit protein bL27 (Campylobacter hominis (strain ATCC BAA-381 / DSM 21671 / CCUG 45161 / LMG 19568 / NCTC 13146 / CH001A)).